A 178-amino-acid chain; its full sequence is Large ribosomal subunit protein uL6 (178 aa).

It belongs to the universal ribosomal protein uL6 family. As to quaternary structure, part of the 50S ribosomal subunit.

Functionally, this protein binds to the 23S rRNA, and is important in its secondary structure. It is located near the subunit interface in the base of the L7/L12 stalk, and near the tRNA binding site of the peptidyltransferase center. In Campylobacter lari (strain RM2100 / D67 / ATCC BAA-1060), this protein is Large ribosomal subunit protein uL6.